A 562-amino-acid polypeptide reads, in one-letter code: Sulfite reductase [NADPH] hemoprotein beta-component (562 aa).

Residues cysteine 426, cysteine 432, cysteine 471, and cysteine 475 each coordinate [4Fe-4S] cluster. Position 475 (cysteine 475) interacts with siroheme.

Belongs to the nitrite and sulfite reductase 4Fe-4S domain family. In terms of assembly, alpha(8)-beta(8). The alpha component is a flavoprotein, the beta component is a hemoprotein. It depends on siroheme as a cofactor. Requires [4Fe-4S] cluster as cofactor.

The catalysed reaction is hydrogen sulfide + 3 NADP(+) + 3 H2O = sulfite + 3 NADPH + 4 H(+). It participates in sulfur metabolism; hydrogen sulfide biosynthesis; hydrogen sulfide from sulfite (NADPH route): step 1/1. Functionally, component of the sulfite reductase complex that catalyzes the 6-electron reduction of sulfite to sulfide. This is one of several activities required for the biosynthesis of L-cysteine from sulfate. This is Sulfite reductase [NADPH] hemoprotein beta-component from Shewanella denitrificans (strain OS217 / ATCC BAA-1090 / DSM 15013).